Here is a 923-residue protein sequence, read N- to C-terminus: Mitochondrial 10-formyltetrahydrofolate dehydrogenase (923 aa).

A mitochondrion; not cleaved-targeting transit peptide spans 1–19 (MLRRGSQALRRFSTGRVYF). Residues 23 to 331 (LKLALIGQSL…PASQYFSTGE (309 aa)) form a hydrolase domain region. Ser-31 is modified (phosphoserine). Residue Lys-60 is modified to N6-succinyllysine. 110-112 (QFI) contributes to the (6R)-10-formyltetrahydrofolate binding site. His-128 (proton donor) is an active-site residue. A (6R)-10-formyltetrahydrofolate-binding site is contributed by Asp-164. Residues 339–416 (AEEVKVAETI…GFIQKVVRKL (78 aa)) enclose the Carrier domain. Ser-375 is subject to O-(pantetheine 4'-phosphoryl)serine. The tract at residues 438-923 (MVKMPYQCFI…LKTKTVTLEY (486 aa)) is aldehyde dehydrogenase domain. NADP(+) contacts are provided by residues 592 to 594 (IPW) and 618 to 621 (KPAQ). Phosphoserine is present on Ser-650. NADP(+) contacts are provided by residues 651 to 656 (GGIAGQ) and 671 to 672 (GS). Lys-681 carries the N6-succinyllysine modification. The Proton acceptor role is filled by Glu-694. 694–695 (EL) provides a ligand contact to NADP(+). Cys-728 acts as the Proton donor in catalysis. Residue Lys-778 coordinates NADP(+). Residue Lys-788 is modified to N6-succinyllysine. 825 to 827 (ESF) is a binding site for NADP(+). An N6-acetyllysine modification is found at Lys-903.

In the N-terminal section; belongs to the GART family. It in the C-terminal section; belongs to the aldehyde dehydrogenase family. ALDH1L subfamily. In terms of processing, phosphopantetheinylation at Ser-375 by AASDHPPT is required for the formyltetrahydrofolate dehydrogenase activity. As to expression, highly expressed in pancreas, heart, brain and skeletal muscle.

It is found in the mitochondrion. The catalysed reaction is (6R)-10-formyltetrahydrofolate + NADP(+) + H2O = (6S)-5,6,7,8-tetrahydrofolate + CO2 + NADPH + H(+). Its function is as follows. Mitochondrial 10-formyltetrahydrofolate dehydrogenase that catalyzes the NADP(+)-dependent conversion of 10-formyltetrahydrofolate to tetrahydrofolate and carbon dioxide. The chain is Mitochondrial 10-formyltetrahydrofolate dehydrogenase from Homo sapiens (Human).